A 102-amino-acid polypeptide reads, in one-letter code: Citrate lyase acyl carrier protein (102 aa).

Residue serine 14 is modified to O-(phosphoribosyl dephospho-coenzyme A)serine.

It belongs to the CitD family. As to quaternary structure, oligomer with a subunit composition of (alpha,beta,gamma)6.

The protein resides in the cytoplasm. In terms of biological role, covalent carrier of the coenzyme of citrate lyase. This chain is Citrate lyase acyl carrier protein, found in Streptococcus mutans serotype c (strain ATCC 700610 / UA159).